Reading from the N-terminus, the 403-residue chain is Phosphopentomutase (403 aa).

Mn(2+) is bound by residues aspartate 13, aspartate 298, histidine 303, aspartate 339, histidine 340, and histidine 351.

It belongs to the phosphopentomutase family. The cofactor is Mn(2+).

The protein resides in the cytoplasm. The catalysed reaction is 2-deoxy-alpha-D-ribose 1-phosphate = 2-deoxy-D-ribose 5-phosphate. The enzyme catalyses alpha-D-ribose 1-phosphate = D-ribose 5-phosphate. The protein operates within carbohydrate degradation; 2-deoxy-D-ribose 1-phosphate degradation; D-glyceraldehyde 3-phosphate and acetaldehyde from 2-deoxy-alpha-D-ribose 1-phosphate: step 1/2. Functionally, isomerase that catalyzes the conversion of deoxy-ribose 1-phosphate (dRib-1-P) and ribose 1-phosphate (Rib-1-P) to deoxy-ribose 5-phosphate (dRib-5-P) and ribose 5-phosphate (Rib-5-P), respectively. The sequence is that of Phosphopentomutase from Streptococcus pyogenes serotype M2 (strain MGAS10270).